The following is a 125-amino-acid chain: Fluoride-specific ion channel FluC (125 aa).

A run of 4 helical transmembrane segments spans residues 7–27, 36–56, 63–83, and 96–116; these read FFIVGAGGFVGSVMRYLMAVV, GFPYATLAVNVLGSFMIGFLS, PYGRLFVMVGVLGGFTTFSTF, and FIFASLNVLLNVLLCLVGVFC. Residues Gly-75 and Thr-78 each contribute to the Na(+) site.

The protein belongs to the fluoride channel Fluc/FEX (TC 1.A.43) family.

It localises to the cell inner membrane. The enzyme catalyses fluoride(in) = fluoride(out). Na(+) is not transported, but it plays an essential structural role and its presence is essential for fluoride channel function. Fluoride-specific ion channel. Important for reducing fluoride concentration in the cell, thus reducing its toxicity. In Elusimicrobium minutum (strain Pei191), this protein is Fluoride-specific ion channel FluC.